Reading from the N-terminus, the 30-residue chain is Cycloviolacin-O5 (30 aa).

The segment at residues 1–30 (GTPCGESCVWIPCISSAVGCSCKNKVCYKN) is a cross-link (cyclopeptide (Gly-Asn)). Intrachain disulfides connect Cys-4/Cys-20, Cys-8/Cys-22, and Cys-13/Cys-27.

Post-translationally, this is a cyclic peptide.

Functionally, probably participates in a plant defense mechanism. The sequence is that of Cycloviolacin-O5 from Viola odorata (Sweet violet).